Here is a 396-residue protein sequence, read N- to C-terminus: S-adenosylmethionine synthase (396 aa).

Glu-12 is a Mg(2+) binding site. An ATP-binding site is contributed by His-18. Glu-46 contacts K(+). Residues Glu-59 and Gln-102 each coordinate L-methionine. ATP-binding positions include 170 to 172 (DGK), 238 to 241 (SGRF), Asp-249, 255 to 256 (RK), Ala-272, Lys-276, and Lys-280. Residue Asp-249 coordinates L-methionine. Lys-280 serves as a coordination point for L-methionine.

Belongs to the AdoMet synthase family. In terms of assembly, homotetramer. Requires Mn(2+) as cofactor. Mg(2+) serves as cofactor. It depends on Co(2+) as a cofactor. The cofactor is K(+).

The protein localises to the cytoplasm. It catalyses the reaction L-methionine + ATP + H2O = S-adenosyl-L-methionine + phosphate + diphosphate. Its pathway is amino-acid biosynthesis; S-adenosyl-L-methionine biosynthesis; S-adenosyl-L-methionine from L-methionine: step 1/1. Functionally, catalyzes the formation of S-adenosylmethionine from methionine and ATP. The reaction comprises two steps that are both catalyzed by the same enzyme: formation of S-adenosylmethionine (AdoMet) and triphosphate, and subsequent hydrolysis of the triphosphate. The protein is S-adenosylmethionine synthase (SAMS) of Triticum aestivum (Wheat).